A 499-amino-acid polypeptide reads, in one-letter code: MKEFQVYLELDRSLQHDFLYPLIFREYIYALAYDHGLNNSILVENLGYDNKSSLLIVKRLITRMYQQKHLILSANDSNKNQFWGYNKNLYSQIISEGFAVSVEIPFSLQLISSLEEAEIVKSYNLRSIHSIFPFFEEKFPYLNYVSDVRIPYPIHLEILVQTLRYWVKDASSFHLLRLFLYEYCNWNSLITPKKWISTFSKSNPRLFLFLYNFYVCEYESILIFLRNKSSYLRLTSSGVLFERIYFYAKIEHRVEVFDKDFPSTLWFFKDPFIHYVRYQGKSILSSKNTPFFMNKWKYYLIHLWQCHFYVWSQPGKIHINQLSEHSFYFLGYFSNVRLNPSVVRSQMLENSFIIENVMKKLDTIIPIIPLIRSLAKAKFCNVLGHPISKPVWADSSDFYIIDRFLRICRNLSHYYNGSSNKKSLYRIKYILRLSCIKTLARKHKSTVRVFLKRLGSKFLEEFFTEEEEILSLILPRASFTLQRLYRGRIWYLDIFYFHQ.

This sequence belongs to the intron maturase 2 family. MatK subfamily.

The protein localises to the plastid. Its subcellular location is the chloroplast. Functionally, usually encoded in the trnK tRNA gene intron. Probably assists in splicing its own and other chloroplast group II introns. This is Maturase K from Gymnocladus dioicus (Kentucky coffee tree).